A 174-amino-acid chain; its full sequence is Chorismate pyruvate-lyase (174 aa).

Residues Met-36, Arg-78, Leu-116, and Glu-157 each contribute to the substrate site.

Belongs to the UbiC family. In terms of assembly, monomer.

The protein resides in the cytoplasm. The catalysed reaction is chorismate = 4-hydroxybenzoate + pyruvate. It functions in the pathway cofactor biosynthesis; ubiquinone biosynthesis. In terms of biological role, removes the pyruvyl group from chorismate, with concomitant aromatization of the ring, to provide 4-hydroxybenzoate (4HB) for the ubiquinone pathway. This Erwinia tasmaniensis (strain DSM 17950 / CFBP 7177 / CIP 109463 / NCPPB 4357 / Et1/99) protein is Chorismate pyruvate-lyase.